A 718-amino-acid polypeptide reads, in one-letter code: Probable glycerol-3-phosphate acyltransferase, mitochondrial (718 aa).

Residues 167–172 carry the HXXXXD motif motif; it reads HRSHLD. A helical transmembrane segment spans residues 409–425; the sequence is MMCSISPVAVVSCLLLA.

This sequence belongs to the GPAT/DAPAT family.

Its subcellular location is the mitochondrion membrane. The enzyme catalyses sn-glycerol 3-phosphate + an acyl-CoA = a 1-acyl-sn-glycero-3-phosphate + CoA. The protein operates within phospholipid metabolism; CDP-diacylglycerol biosynthesis; CDP-diacylglycerol from sn-glycerol 3-phosphate: step 1/3. The protein is Probable glycerol-3-phosphate acyltransferase, mitochondrial (acl-6) of Caenorhabditis elegans.